Here is a 310-residue protein sequence, read N- to C-terminus: Thioredoxin reductase (310 aa).

Residue 34-41 coordinates FAD; the sequence is NGIQPGGQ. Cysteine 135 and cysteine 138 are joined by a disulfide. 281–290 provides a ligand contact to FAD; it reads DVQDKIYRQA.

It belongs to the class-II pyridine nucleotide-disulfide oxidoreductase family. Homodimer. The cofactor is FAD.

It is found in the cytoplasm. It carries out the reaction [thioredoxin]-dithiol + NADP(+) = [thioredoxin]-disulfide + NADPH + H(+). In Rickettsia bellii (strain RML369-C), this protein is Thioredoxin reductase (trxB).